Reading from the N-terminus, the 122-residue chain is Large ribosomal subunit protein uL14 (122 aa).

Belongs to the universal ribosomal protein uL14 family. As to quaternary structure, part of the 50S ribosomal subunit. Forms a cluster with proteins L3 and L19. In the 70S ribosome, L14 and L19 interact and together make contacts with the 16S rRNA in bridges B5 and B8.

In terms of biological role, binds to 23S rRNA. Forms part of two intersubunit bridges in the 70S ribosome. This chain is Large ribosomal subunit protein uL14, found in Moorella thermoacetica (strain ATCC 39073 / JCM 9320).